The following is a 313-amino-acid chain: Ornithine carbamoyltransferase (313 aa).

Residues 57–60 (STRT), Arg-108, and 135–138 (HPTQ) contribute to the carbamoyl phosphate site. L-ornithine contacts are provided by residues Asn-167, Asp-231, and 235 to 236 (SM). Residues 272 to 273 (CL) and Arg-300 contribute to the carbamoyl phosphate site.

Belongs to the aspartate/ornithine carbamoyltransferase superfamily. OTCase family.

Its subcellular location is the cytoplasm. The catalysed reaction is carbamoyl phosphate + L-ornithine = L-citrulline + phosphate + H(+). Its pathway is amino-acid biosynthesis; L-arginine biosynthesis; L-arginine from L-ornithine and carbamoyl phosphate: step 1/3. Reversibly catalyzes the transfer of the carbamoyl group from carbamoyl phosphate (CP) to the N(epsilon) atom of ornithine (ORN) to produce L-citrulline. This Thermotoga petrophila (strain ATCC BAA-488 / DSM 13995 / JCM 10881 / RKU-1) protein is Ornithine carbamoyltransferase.